A 716-amino-acid polypeptide reads, in one-letter code: tRNA(Met) cytidine acetyltransferase TmcA (716 aa).

Residues glutamine 192, 217 to 226, and arginine 364 contribute to the ATP site; that span reads GRGKSYVIGL. Positions 401–567 constitute an N-acetyltransferase domain; the sequence is REVLARDREV…KNVALAKPLD (167 aa). Residues 493 to 495 and 500 to 506 contribute to the acetyl-CoA site; these read IAV and QRRGLGS.

Belongs to the RNA cytidine acetyltransferase family. TmcA subfamily.

It is found in the cytoplasm. It catalyses the reaction cytidine(34) in elongator tRNA(Met) + acetyl-CoA + ATP + H2O = N(4)-acetylcytidine(34) in elongator tRNA(Met) + ADP + phosphate + CoA + H(+). In terms of biological role, catalyzes the formation of N(4)-acetylcytidine (ac(4)C) at the wobble position of tRNA(Met), by using acetyl-CoA as an acetyl donor and ATP (or GTP). This chain is tRNA(Met) cytidine acetyltransferase TmcA, found in Aeropyrum pernix (strain ATCC 700893 / DSM 11879 / JCM 9820 / NBRC 100138 / K1).